Reading from the N-terminus, the 130-residue chain is MRHRKSGRQLNRNSSHRQAMFRNMAGSLVRHEIIKTTLPKAKELRRVVEPLITLAKIDSVANRRLAFARTRDNEIVAKLFNELGPRFASRAGGYTRILKCGFRAGDNAPMAYIELVDRATEPQTEVATAE.

This sequence belongs to the bacterial ribosomal protein bL17 family. In terms of assembly, part of the 50S ribosomal subunit. Contacts protein L32.

In Photorhabdus laumondii subsp. laumondii (strain DSM 15139 / CIP 105565 / TT01) (Photorhabdus luminescens subsp. laumondii), this protein is Large ribosomal subunit protein bL17.